We begin with the raw amino-acid sequence, 514 residues long: 2,3-bisphosphoglycerate-independent phosphoglycerate mutase (514 aa).

Mn(2+)-binding residues include Asp14 and Ser64. The Phosphoserine intermediate role is filled by Ser64. Substrate-binding positions include His125, 155-156 (RD), Arg187, Arg193, 263-266 (RADR), and Lys336. 5 residues coordinate Mn(2+): Asp403, His407, Asp444, His445, and His463.

The protein belongs to the BPG-independent phosphoglycerate mutase family. As to quaternary structure, monomer. Mn(2+) serves as cofactor.

It carries out the reaction (2R)-2-phosphoglycerate = (2R)-3-phosphoglycerate. The protein operates within carbohydrate degradation; glycolysis; pyruvate from D-glyceraldehyde 3-phosphate: step 3/5. Functionally, catalyzes the interconversion of 2-phosphoglycerate and 3-phosphoglycerate. This Salmonella paratyphi B (strain ATCC BAA-1250 / SPB7) protein is 2,3-bisphosphoglycerate-independent phosphoglycerate mutase.